A 370-amino-acid chain; its full sequence is tRNA 2-selenouridine synthase (370 aa).

Residues Phe-12 to Gln-136 enclose the Rhodanese domain. Cys-95 functions as the S-selanylcysteine intermediate in the catalytic mechanism.

This sequence belongs to the SelU family. In terms of assembly, monomer.

It catalyses the reaction 5-methylaminomethyl-2-thiouridine(34) in tRNA + selenophosphate + (2E)-geranyl diphosphate + H2O + H(+) = 5-methylaminomethyl-2-selenouridine(34) in tRNA + (2E)-thiogeraniol + phosphate + diphosphate. The enzyme catalyses 5-methylaminomethyl-2-thiouridine(34) in tRNA + (2E)-geranyl diphosphate = 5-methylaminomethyl-S-(2E)-geranyl-thiouridine(34) in tRNA + diphosphate. The catalysed reaction is 5-methylaminomethyl-S-(2E)-geranyl-thiouridine(34) in tRNA + selenophosphate + H(+) = 5-methylaminomethyl-2-(Se-phospho)selenouridine(34) in tRNA + (2E)-thiogeraniol. It carries out the reaction 5-methylaminomethyl-2-(Se-phospho)selenouridine(34) in tRNA + H2O = 5-methylaminomethyl-2-selenouridine(34) in tRNA + phosphate. Involved in the post-transcriptional modification of the uridine at the wobble position (U34) of tRNA(Lys), tRNA(Glu) and tRNA(Gln). Catalyzes the conversion of 2-thiouridine (S2U-RNA) to 2-selenouridine (Se2U-RNA). Acts in a two-step process involving geranylation of 2-thiouridine (S2U) to S-geranyl-2-thiouridine (geS2U) and subsequent selenation of the latter derivative to 2-selenouridine (Se2U) in the tRNA chain. The polypeptide is tRNA 2-selenouridine synthase (Pseudomonas putida (strain ATCC 700007 / DSM 6899 / JCM 31910 / BCRC 17059 / LMG 24140 / F1)).